The chain runs to 273 residues: MAFGVEPPEHVTPWFKPVYEATFQFGGVAWTLCYILIAREGMRTKSYGMPLFALANNFAWEMVYALWVVDNAFEKTAMTIWMLIDTPIIYSILKHGVLEWQHAPMVSRNLKSILVGLIALCAAAHWSWQSWWIGNEMGKRDDLEGADLTQMAYWAVSMCQFLVSTMSLAMLCVRGHSGGVSWMIWLSRFLGTLIGLNMNYAWAYYTWPEAHEYFMSAPAVFVWGVTTVCDIIYGFVLYHVKSNERELSDGRKVAAEADDEQVGGWSKMKTGKN.

Transmembrane regions (helical) follow at residues Val-18–Ala-38, Met-49–Val-69, Met-78–Leu-98, Ile-113–Ile-133, Tyr-153–Val-173, Gly-178–Met-198, and Ala-217–Leu-237.

Belongs to the paxB family.

It localises to the membrane. It carries out the reaction ilicicolin A epoxide = ilicicolin C. It functions in the pathway secondary metabolite biosynthesis; terpenoid biosynthesis. Its function is as follows. Terpene cyclase; part of the asc-1 gene cluster that mediates the biosynthesis of both ascochlorin and ascofuranone, a strong inhibitor of cyanide-insensitive alternative oxidases and a promising drug candidate against African trypanosomiasis. The first step in the pathway is performed by the non-reducing polyketide synthase ascC that produces orsellinic acid by condensing acetyl-CoA with 3 malonyl-CoA units. Orsellinic acid is then prenylated by the prenyltransferase ascA to yield ilicicolinic acid B. Ilicicolinic acid B is further reduced to ilicicolin B by the reductase ascB. The halogenase ascD then chlorinates ilicicolin B to produce ilicicolin A which is converted to ilicicolin A epoxide by the cytochrome P450 monooxygenase ascE that catalyzes stereoselective epoxidation of the terminal double bond of the prenyl group. Ilicicolin A epoxide is the last common precursor for the biosynthesis of ascofuranone and ascochlorin. The terpene cyclase ascF produces a monocyclic terpene, and the cyclization reaction is proposed to be initiated by protonation of the terminal epoxide of ilicicolin A epoxide to generate a monocyclic tertiarycation, which is followed by a series of hydride and methyl shifts with abstraction of proton, leading to the formation of the (14S,15R,19R)-trimethylcyclohexanone ring structure of ilicicolin C, which is finally reduced to ascochlorin by the dehydrogenase ascG. On the other hand, ilicicolin A epoxide is hydroxylated by the cytochrome P450 monooxygenase ascH, and the resultant product is cyclized by the terpene cyclase ascI to ascofuranol via protonation-initiated epoxide ring opening, which facilitates the 6-endo-tet cyclization to form the tetrahy-drofuran ring. Finally, ascofuranol is oxidized into ascofuranone by ascJ. The chain is Terpene cyclase ascF from Acremonium egyptiacum (Oospora egyptiaca).